A 359-amino-acid polypeptide reads, in one-letter code: DNA polymerase IV (359 aa).

A UmuC domain is found at 4–184 (IVHVDMDAFY…LKVNRIPGVG (181 aa)). 2 residues coordinate Mg(2+): Asp-8 and Asp-102. Glu-103 is a catalytic residue.

Belongs to the DNA polymerase type-Y family. Monomer. Mg(2+) serves as cofactor.

Its subcellular location is the cytoplasm. It catalyses the reaction DNA(n) + a 2'-deoxyribonucleoside 5'-triphosphate = DNA(n+1) + diphosphate. Poorly processive, error-prone DNA polymerase involved in untargeted mutagenesis. Copies undamaged DNA at stalled replication forks, which arise in vivo from mismatched or misaligned primer ends. These misaligned primers can be extended by PolIV. Exhibits no 3'-5' exonuclease (proofreading) activity. May be involved in translesional synthesis, in conjunction with the beta clamp from PolIII. In Xanthomonas euvesicatoria pv. vesicatoria (strain 85-10) (Xanthomonas campestris pv. vesicatoria), this protein is DNA polymerase IV.